Reading from the N-terminus, the 338-residue chain is Glycerol-3-phosphate dehydrogenase [NAD(P)+] (338 aa).

Positions 13, 14, and 108 each coordinate NADPH. 3 residues coordinate sn-glycerol 3-phosphate: K108, G139, and S141. A143 is a binding site for NADPH. Positions 194, 247, 257, 258, and 259 each coordinate sn-glycerol 3-phosphate. K194 acts as the Proton acceptor in catalysis. R258 provides a ligand contact to NADPH. Positions 282 and 284 each coordinate NADPH.

The protein belongs to the NAD-dependent glycerol-3-phosphate dehydrogenase family.

The protein localises to the cytoplasm. It carries out the reaction sn-glycerol 3-phosphate + NAD(+) = dihydroxyacetone phosphate + NADH + H(+). The enzyme catalyses sn-glycerol 3-phosphate + NADP(+) = dihydroxyacetone phosphate + NADPH + H(+). It participates in membrane lipid metabolism; glycerophospholipid metabolism. In terms of biological role, catalyzes the reduction of the glycolytic intermediate dihydroxyacetone phosphate (DHAP) to sn-glycerol 3-phosphate (G3P), the key precursor for phospholipid synthesis. The protein is Glycerol-3-phosphate dehydrogenase [NAD(P)+] of Streptococcus pneumoniae serotype 19F (strain G54).